We begin with the raw amino-acid sequence, 268 residues long: MKFAVIGNPISHSLSPVMHRANFNSLGLDDTYEALNIPIEDFHLIKEIISKKELDGFNITIPHKERIIPYLDHVDEQAINAGAVNTVLIKDGKWIGYNTDGIGYVKGLHSVYPDLENAYILILGAGGASKGIAYELAKFVKPKLTVANRTMARFESWNLNINQISLADAEKYLAEFDIVINTTPAGMAGNNESIINLKHLSPNTLMSDIVYIPYKTPILEEAERKGNHIYNGLDMFVYQGAESFKIWTNKDADINSMKTAVLQQLKGE.

Shikimate-binding positions include 13 to 15 (SLS) and T60. K64 serves as the catalytic Proton acceptor. E76 serves as a coordination point for NADP(+). Shikimate-binding residues include N85 and D100. Residues 124-128 (GAGGA), 148-153 (NRTMAR), and I209 each bind NADP(+). Position 211 (Y211) interacts with shikimate. G232 is an NADP(+) binding site.

This sequence belongs to the shikimate dehydrogenase family. In terms of assembly, homodimer.

The enzyme catalyses shikimate + NADP(+) = 3-dehydroshikimate + NADPH + H(+). It functions in the pathway metabolic intermediate biosynthesis; chorismate biosynthesis; chorismate from D-erythrose 4-phosphate and phosphoenolpyruvate: step 4/7. Involved in the biosynthesis of the chorismate, which leads to the biosynthesis of aromatic amino acids. Catalyzes the reversible NADPH linked reduction of 3-dehydroshikimate (DHSA) to yield shikimate (SA). The polypeptide is Shikimate dehydrogenase (NADP(+)) (Staphylococcus aureus (strain MRSA252)).